The chain runs to 184 residues: Autophagy-related protein 101 (184 aa).

Belongs to the ATG101 family. Component of the atg1 kinase complex composed of at least atg1, atg13, atg17 and atg101. Interacts directly with atg13.

The protein localises to the cytoplasm. It localises to the nucleus. The protein resides in the preautophagosomal structure membrane. Its function is as follows. Autophagy factor required for autophagosome formation. Component of the atg1 kinase complex in which it stabilizes atg13. Is also responsible for recruiting downstream factors to the autophagosome-formation site. Has a role in meiosis and sporulation. This Schizosaccharomyces pombe (strain 972 / ATCC 24843) (Fission yeast) protein is Autophagy-related protein 101.